The following is a 305-amino-acid chain: UDP-3-O-acyl-N-acetylglucosamine deacetylase (305 aa).

His-79, His-238, and Asp-242 together coordinate Zn(2+). His-265 functions as the Proton donor in the catalytic mechanism.

It belongs to the LpxC family. The cofactor is Zn(2+).

The enzyme catalyses a UDP-3-O-[(3R)-3-hydroxyacyl]-N-acetyl-alpha-D-glucosamine + H2O = a UDP-3-O-[(3R)-3-hydroxyacyl]-alpha-D-glucosamine + acetate. It participates in glycolipid biosynthesis; lipid IV(A) biosynthesis; lipid IV(A) from (3R)-3-hydroxytetradecanoyl-[acyl-carrier-protein] and UDP-N-acetyl-alpha-D-glucosamine: step 2/6. In terms of biological role, catalyzes the hydrolysis of UDP-3-O-myristoyl-N-acetylglucosamine to form UDP-3-O-myristoylglucosamine and acetate, the committed step in lipid A biosynthesis. The chain is UDP-3-O-acyl-N-acetylglucosamine deacetylase from Erwinia tasmaniensis (strain DSM 17950 / CFBP 7177 / CIP 109463 / NCPPB 4357 / Et1/99).